A 200-amino-acid chain; its full sequence is Glycerol-3-phosphate acyltransferase (200 aa).

A run of 5 helical transmembrane segments spans residues 2-22, 51-71, 84-104, 114-134, and 159-179; these read FNIP…AVIV, KAAV…VLLA, AIAA…FFGF, LGVL…IWLV, and FFMP…LVLF.

The protein belongs to the PlsY family. As to quaternary structure, probably interacts with PlsX.

It localises to the cell inner membrane. The enzyme catalyses an acyl phosphate + sn-glycerol 3-phosphate = a 1-acyl-sn-glycero-3-phosphate + phosphate. It participates in lipid metabolism; phospholipid metabolism. Functionally, catalyzes the transfer of an acyl group from acyl-phosphate (acyl-PO(4)) to glycerol-3-phosphate (G3P) to form lysophosphatidic acid (LPA). This enzyme utilizes acyl-phosphate as fatty acyl donor, but not acyl-CoA or acyl-ACP. This is Glycerol-3-phosphate acyltransferase from Neisseria meningitidis serogroup C / serotype 2a (strain ATCC 700532 / DSM 15464 / FAM18).